The sequence spans 273 residues: NH(3)-dependent NAD(+) synthetase (273 aa).

An ATP-binding site is contributed by 47–54 (GISGGQDS). A Mg(2+)-binding site is contributed by aspartate 53. Arginine 139 provides a ligand contact to deamido-NAD(+). Residue threonine 159 coordinates ATP. Glutamate 164 is a Mg(2+) binding site. Positions 172 and 179 each coordinate deamido-NAD(+). ATP contacts are provided by lysine 188 and threonine 210. Residue 259–260 (HK) participates in deamido-NAD(+) binding.

Belongs to the NAD synthetase family. In terms of assembly, homodimer.

It catalyses the reaction deamido-NAD(+) + NH4(+) + ATP = AMP + diphosphate + NAD(+) + H(+). The protein operates within cofactor biosynthesis; NAD(+) biosynthesis; NAD(+) from deamido-NAD(+) (ammonia route): step 1/1. Its function is as follows. Catalyzes the ATP-dependent amidation of deamido-NAD to form NAD. Uses ammonia as a nitrogen source. The polypeptide is NH(3)-dependent NAD(+) synthetase (Staphylococcus saprophyticus subsp. saprophyticus (strain ATCC 15305 / DSM 20229 / NCIMB 8711 / NCTC 7292 / S-41)).